The sequence spans 525 residues: Acyl-lipid (9-3)-desaturase (525 aa).

The 75-residue stretch at 102-176 folds into the Cytochrome b5 heme-binding domain; it reads KSTHPLSEVA…LQDFYIGDVE (75 aa). Residues histidine 137 and histidine 159 each coordinate heme. Residues 216 to 236 form a helical membrane-spanning segment; the sequence is VAIFAASIAIICWSKTISAVL. The short motif at 254 to 258 is the Histidine box-1 element; the sequence is HDFLH. A helical transmembrane segment spans residues 266–286; sequence WLNEVVGYVIGNAVLGFSTGW. The Histidine box-2 motif lies at 291–295; that stretch reads HNLHH. A run of 3 helical transmembrane segments spans residues 340 to 360, 378 to 398, and 401 to 421; these read QHLF…FWSW, GTVL…LPGW, and LVWM…VFVL. The short motif at 462-466 is the Histidine box-3 element; it reads QIEHH.

Belongs to the fatty acid desaturase type 1 family.

It localises to the membrane. It catalyses the reaction (9Z,12Z,15Z)-octadecatrienoyl-containing glycerolipid + 2 Fe(II)-[cytochrome b5] + O2 + 2 H(+) = (6Z,9Z,12Z,15Z)-octadecatetraenoyl-containing glycerolipid + 2 Fe(III)-[cytochrome b5] + 2 H2O. The catalysed reaction is a (9Z,12Z)-octadecadienoyl-containing glycerolipid + 2 Fe(II)-[cytochrome b5] + O2 + 2 H(+) = (6Z,9Z,12Z)-octadecatrienoyl-containing glycerolipid + 2 Fe(III)-[cytochrome b5] + 2 H2O. Its pathway is lipid metabolism; polyunsaturated fatty acid biosynthesis. Functionally, fatty acid desaturase able to introduce a delta(6)-double bond into delta(9)-unsaturated fatty-acid substrates. Can use both linoleic acid (18:2(9Z,12Z)) and alpha-linolenic acid (18:3(9Z,12Z,15Z)) as substrates. Required for the biosynthesis of arachidonic acid (20:4(5z,8Z,11Z,14Z)). The protein is Acyl-lipid (9-3)-desaturase of Physcomitrium patens (Spreading-leaved earth moss).